The primary structure comprises 352 residues: Ribosome biogenesis protein BRX1 homolog (352 aa).

The segment at 1–55 (MGKFSKIKKVQEEESAHQKMEWEAAGAKDSSSDDSSDESDNDDQPKQATEETRKR) is disordered. Positions 9 to 22 (KVQEEESAHQKMEW) are enriched in basic and acidic residues. The segment covering 32–42 (SDDSSDESDND) has biased composition (acidic residues). A compositionally biased stretch (basic and acidic residues) spans 43 to 55 (DQPKQATEETRKR). Positions 63–253 (ERVLVLCSRG…MVRLFAGSFE (191 aa)) constitute a Brix domain.

It belongs to the BRX1 family.

It is found in the nucleus. The protein resides in the nucleolus. In terms of biological role, required for biogenesis of the 60S ribosomal subunit. This Caenorhabditis elegans protein is Ribosome biogenesis protein BRX1 homolog.